Reading from the N-terminus, the 460-residue chain is tRNA modification GTPase MnmE (460 aa).

The (6S)-5-formyl-5,6,7,8-tetrahydrofolate site is built by Arg25, Glu87, and Arg126. The TrmE-type G domain occupies 221–381 (GLKVAIVGRP…LETAIANLVQ (161 aa)). A K(+)-binding site is contributed by Asn231. GTP contacts are provided by residues 231 to 236 (NVGKSS), 250 to 256 (TDLPGTT), and 275 to 278 (DTAG). Ser235 serves as a coordination point for Mg(2+). K(+) is bound by residues Thr250, Leu252, and Thr255. Thr256 contacts Mg(2+). Position 460 (Lys460) interacts with (6S)-5-formyl-5,6,7,8-tetrahydrofolate.

Belongs to the TRAFAC class TrmE-Era-EngA-EngB-Septin-like GTPase superfamily. TrmE GTPase family. In terms of assembly, homodimer. Heterotetramer of two MnmE and two MnmG subunits. It depends on K(+) as a cofactor.

It is found in the cytoplasm. Its function is as follows. Exhibits a very high intrinsic GTPase hydrolysis rate. Involved in the addition of a carboxymethylaminomethyl (cmnm) group at the wobble position (U34) of certain tRNAs, forming tRNA-cmnm(5)s(2)U34. This is tRNA modification GTPase MnmE from Picosynechococcus sp. (strain ATCC 27264 / PCC 7002 / PR-6) (Agmenellum quadruplicatum).